A 329-amino-acid chain; its full sequence is 4-hydroxythreonine-4-phosphate dehydrogenase (329 aa).

Substrate contacts are provided by His-136 and Thr-137. 3 residues coordinate a divalent metal cation: His-166, His-211, and His-266. 3 residues coordinate substrate: Lys-274, Asn-283, and Arg-292.

The protein belongs to the PdxA family. Homodimer. Requires Zn(2+) as cofactor. The cofactor is Mg(2+). Co(2+) serves as cofactor.

Its subcellular location is the cytoplasm. It carries out the reaction 4-(phosphooxy)-L-threonine + NAD(+) = 3-amino-2-oxopropyl phosphate + CO2 + NADH. Its pathway is cofactor biosynthesis; pyridoxine 5'-phosphate biosynthesis; pyridoxine 5'-phosphate from D-erythrose 4-phosphate: step 4/5. Functionally, catalyzes the NAD(P)-dependent oxidation of 4-(phosphooxy)-L-threonine (HTP) into 2-amino-3-oxo-4-(phosphooxy)butyric acid which spontaneously decarboxylates to form 3-amino-2-oxopropyl phosphate (AHAP). This chain is 4-hydroxythreonine-4-phosphate dehydrogenase, found in Salmonella typhi.